The sequence spans 228 residues: General odorant-binding protein 71 (228 aa).

The signal sequence occupies residues 1–20 (MCGAIVLLLLVGTSPAPVEG). The disordered stretch occupies residues 50-131 (TMGEWGQRDR…GNSSSSSSST (82 aa)). Over residues 55-72 (GQRDRNGEEQQMMRDYGR) the composition is skewed to basic and acidic residues. A compositionally biased stretch (low complexity) spans 83–99 (GGQTSGSSSSGSAGEHS). A compositionally biased stretch (gly residues) spans 111–120 (AGQGGNGTRS). Residues 121 to 131 (GGNSSSSSSST) are compositionally biased toward low complexity. 2 disulfides stabilise this stretch: cysteine 138-cysteine 199 and cysteine 185-cysteine 208.

The protein belongs to the PBP/GOBP family.

The protein localises to the secreted. In terms of biological role, present in the aqueous fluid surrounding olfactory sensory dendrites and are thought to aid in the capture and transport of hydrophobic odorants into and through this fluid. This Anopheles gambiae (African malaria mosquito) protein is General odorant-binding protein 71 (Obp71).